Reading from the N-terminus, the 109-residue chain is Iron-sulfur cluster assembly protein CyaY (109 aa).

Belongs to the frataxin family.

Involved in iron-sulfur (Fe-S) cluster assembly. May act as a regulator of Fe-S biogenesis. The chain is Iron-sulfur cluster assembly protein CyaY from Bordetella bronchiseptica (strain ATCC BAA-588 / NCTC 13252 / RB50) (Alcaligenes bronchisepticus).